The chain runs to 56 residues: Large ribosomal subunit protein bL32 (56 aa).

Over residues 1 to 16 (MAVQKSKKSRSMRGMR) the composition is skewed to basic residues. A disordered region spans residues 1 to 21 (MAVQKSKKSRSMRGMRRSHDA).

It belongs to the bacterial ribosomal protein bL32 family.

This Vibrio atlanticus (strain LGP32) (Vibrio splendidus (strain Mel32)) protein is Large ribosomal subunit protein bL32.